Here is a 159-residue protein sequence, read N- to C-terminus: Major latex protein 149 (159 aa).

Belongs to the MLP family. As to expression, laticifer.

The protein localises to the vacuole. The protein resides in the cytoplasmic vesicle. Functionally, not known; MLPs constitute up to 50% of the soluble latex protein. The chain is Major latex protein 149 (MLP149) from Papaver somniferum (Opium poppy).